Here is a 449-residue protein sequence, read N- to C-terminus: MDPGQRPNPFGAPGAIPKKPCLSQGSPGTSGSGAPCDEPSRSESPGEGPSGTGGSAAAGDITRQAVVAAITEWSRTRQLRISTGASEGKASIKDWIVCQVNSGKFPGVEWEDEERTRFRIPVTPLADPCFEWRRDGELGVVYIRERGNMPVDASFKGTRGRRRMLAALRRTRGLQEIGKGISQDGHHFLVFRVRKPEEEQCVECGVVAGAVHDFNNMARLLQEGFFSPGQCLPGEIVTPVPSCTTAEGQEAVIDWGRLFIRMYYNGEQVHELLTTSQSGCRISSALRRDPAVHYCAVGSPGQVWLPNVPNLACEIAKRELCDTLDACAKGILLTSSCNGIFCVCYHNGPVHFIGNTVPPDSGPLLLPQGKPTRIFNPNTFLVGLANSPLPAPSHVTCPLVKLWLGKPVAVGKLEPHAPSPRDFAARCSNFSDACVVLEIMPKPLWDAMQ.

The segment at 1 to 60 is disordered; that stretch reads MDPGQRPNPFGAPGAIPKKPCLSQGSPGTSGSGAPCDEPSRSESPGEGPSGTGGSAAAGD. The IRF tryptophan pentad repeat DNA-binding region spans 89-195; it reads KASIKDWIVC…HHFLVFRVRK (107 aa). Residues Lys406 and Lys442 each carry the N6-propionyllysine; by host modification.

It belongs to the IRF family. Forms homodimers. Interacts with host IRF3, IRF7, and CREBBP. Interacts with host SYNCRIP. Interacts with host USP7. Interacts (via C-terminus) with host HERC5. Interacts with host GABARAPL1. Interacts with host SIRT6. In terms of processing, ISGylated. Post-translationally, propionylated in lysine residues Lys-406 and Lys-442, which is required for effective inhibition of IFN-beta production and antiviral signaling.

Its subcellular location is the host cytoplasm. Functionally, plays a role in the inhibition of host innate response by repressing the expression of interferon-inducible genes and blocking host IRF1- and IRF3-mediated transcription. Blocks the interaction between host IRF3 and CREBBP. Regulates the host cellular metabolism by increasing glucose uptake, ATP production and lactate secretion through down-regulation of heterogeneous nuclear ribonuclear protein Q1/SYNCRIP. Mechanistically, induces ubiquitination and degradation of SYNCRIP through the ubiquitin-proteasome pathway by recruiting KLHL3/CUL3 ubiquitin ligase complex. Disrupts host TP53 signaling pathway during viral infection by interacting with host USP7 and thereby decreasing the availability of USP7 for deubiquitinating and stabilizing TP53. Plays a role in the global inhibition of protein ISGylation by interacting with host HERC5 leading to its inhibition. Promotes its own propionylation by blocking SIRT6 interaction with ubiquitin-specific peptidase 10/USP10 leading to SIRT6 degradation via a ubiquitin-proteasome pathway. In turn, propionylation is required to block IRF3-CBP/p300 recruitment and to repress the STING DNA sensing pathway. Plays a role in the activation of mitophagy during infection via interaction with the host proteins NIX/BNIP3L, TUFM and GABARAPL1 thereby inhibiting antiviral responses and contributing to productive replication. This Homo sapiens (Human) protein is VIRF-1 (vIRF-1).